The following is a 544-amino-acid chain: Chaperonin GroEL (544 aa).

Residues 29 to 32, Lys-50, 86 to 90, Gly-415, and Asp-495 contribute to the ATP site; these read TLGP and DGTTT.

It belongs to the chaperonin (HSP60) family. In terms of assembly, forms a cylinder of 14 subunits composed of two heptameric rings stacked back-to-back. Interacts with the co-chaperonin GroES.

It is found in the cytoplasm. It catalyses the reaction ATP + H2O + a folded polypeptide = ADP + phosphate + an unfolded polypeptide.. In terms of biological role, together with its co-chaperonin GroES, plays an essential role in assisting protein folding. The GroEL-GroES system forms a nano-cage that allows encapsulation of the non-native substrate proteins and provides a physical environment optimized to promote and accelerate protein folding. The protein is Chaperonin GroEL of Tannerella forsythia (Bacteroides forsythus).